A 701-amino-acid polypeptide reads, in one-letter code: Ribosomal RNA large subunit methyltransferase K/L (701 aa).

Residues 44 to 155 (QAYKICLWSR…SDKLTVYLDL (112 aa)) form the THUMP domain.

The protein belongs to the methyltransferase superfamily. RlmKL family.

It is found in the cytoplasm. It carries out the reaction guanosine(2445) in 23S rRNA + S-adenosyl-L-methionine = N(2)-methylguanosine(2445) in 23S rRNA + S-adenosyl-L-homocysteine + H(+). It catalyses the reaction guanosine(2069) in 23S rRNA + S-adenosyl-L-methionine = N(2)-methylguanosine(2069) in 23S rRNA + S-adenosyl-L-homocysteine + H(+). Specifically methylates the guanine in position 2445 (m2G2445) and the guanine in position 2069 (m7G2069) of 23S rRNA. The protein is Ribosomal RNA large subunit methyltransferase K/L of Pseudoalteromonas atlantica (strain T6c / ATCC BAA-1087).